The primary structure comprises 97 residues: Large ribosomal subunit protein bL27 (97 aa).

Residues 1–12 (MLKMNLANLQLF) constitute a propeptide that is removed on maturation. Residues 14–37 (HKKGGGSTSNGRDSQAKRLGAKAA) are disordered.

The protein belongs to the bacterial ribosomal protein bL27 family. The N-terminus is cleaved by ribosomal processing cysteine protease Prp.

The sequence is that of Large ribosomal subunit protein bL27 from Streptococcus agalactiae serotype III (strain NEM316).